The following is a 468-amino-acid chain: Putative amidase AmiC (468 aa).

Residues K80 and S155 each act as charge relay system in the active site. The active-site Acyl-ester intermediate is S179.

Belongs to the amidase family.

It carries out the reaction a monocarboxylic acid amide + H2O = a monocarboxylate + NH4(+). The chain is Putative amidase AmiC (amiC) from Mycobacterium leprae (strain TN).